We begin with the raw amino-acid sequence, 305 residues long: Putative glutamine--fructose-6-phosphate aminotransferase [isomerizing] (305 aa).

Catalysis depends on Cys-2, which acts as the Nucleophile; for GATase activity. One can recognise a Glutamine amidotransferase type-2 domain in the interval 2–305; the sequence is CGIFGYCNFL…RLCITSAVCE (304 aa).

The catalysed reaction is D-fructose 6-phosphate + L-glutamine = D-glucosamine 6-phosphate + L-glutamate. The protein operates within nucleotide-sugar biosynthesis; UDP-N-acetyl-alpha-D-glucosamine biosynthesis; alpha-D-glucosamine 6-phosphate from D-fructose 6-phosphate: step 1/1. Its function is as follows. Involved in amino sugar synthesis (formation of chitin, supplies the amino sugars of asparagine-linked oligosaccharides of glycoproteins). This chain is Putative glutamine--fructose-6-phosphate aminotransferase [isomerizing], found in Saccharomyces cerevisiae (strain Lalvin EC1118 / Prise de mousse) (Baker's yeast).